The chain runs to 434 residues: Enolase (434 aa).

Position 167 (Gln-167) interacts with (2R)-2-phosphoglycerate. Glu-209 acts as the Proton donor in catalysis. Asp-246, Glu-291, and Asp-318 together coordinate Mg(2+). Residues Lys-343, Arg-372, Ser-373, and Lys-394 each contribute to the (2R)-2-phosphoglycerate site. Residue Lys-343 is the Proton acceptor of the active site.

The protein belongs to the enolase family. As to quaternary structure, component of the RNA degradosome, a multiprotein complex involved in RNA processing and mRNA degradation. Mg(2+) is required as a cofactor.

The protein localises to the cytoplasm. Its subcellular location is the secreted. It localises to the cell surface. The catalysed reaction is (2R)-2-phosphoglycerate = phosphoenolpyruvate + H2O. It functions in the pathway carbohydrate degradation; glycolysis; pyruvate from D-glyceraldehyde 3-phosphate: step 4/5. Its function is as follows. Catalyzes the reversible conversion of 2-phosphoglycerate (2-PG) into phosphoenolpyruvate (PEP). It is essential for the degradation of carbohydrates via glycolysis. This chain is Enolase, found in Buchnera aphidicola subsp. Acyrthosiphon pisum (strain APS) (Acyrthosiphon pisum symbiotic bacterium).